The primary structure comprises 67 residues: Conotoxin Cal14.2c (67 aa).

A signal peptide spans 1-20; it reads MNVTVMFLVLLLLTMPLTDG. Residues 21-48 constitute a propeptide that is removed on maturation; the sequence is FNIRATNGGELFGPVQRDAGNVLDHGFQ.

It belongs to the conotoxin L superfamily. Post-translationally, contains 2 disulfide bonds. Expressed by the venom duct.

It localises to the secreted. In terms of biological role, probable neurotoxin with unknown target. Possibly targets ion channels. The sequence is that of Conotoxin Cal14.2c from Californiconus californicus (California cone).